A 276-amino-acid polypeptide reads, in one-letter code: Probable ABC transporter permease protein NosY (276 aa).

The next 6 membrane-spanning stretches (helical) occupy residues 20-40 (WLLA…WLGA), 55-75 (IASL…LLAY), 111-131 (ILAL…ALLV), 146-166 (FMIS…VLSG), 179-199 (LGVW…LLVL), and 251-271 (VLWL…YAIF).

In terms of assembly, the complex may be composed of an ATP-binding protein (NosF), a transmembrane protein (NosY) and a solute-binding protein (NosD).

Its subcellular location is the cell inner membrane. In terms of biological role, required for the assembly of the copper chromophores of nitrous oxide reductase. Could be part of the ABC transporter complex NosDFY. The protein is Probable ABC transporter permease protein NosY of Stutzerimonas stutzeri (Pseudomonas stutzeri).